Consider the following 430-residue polypeptide: Tektin-2 (430 aa).

Coiled coils occupy residues 75-162 (KETL…FQHL) and 226-380 (KNRA…IACK).

Belongs to the tektin family. In terms of assembly, microtubule inner protein component of sperm flagellar doublet microtubules. May interact with CCDC172. Post-translationally, ubiquitinated, leading to its degradation. Deubiquitinated by USP16, promoting its stability. In terms of processing, tyrosine phosphorylated. In terms of tissue distribution, expressed in the testes (at protein level).

It localises to the cytoplasm. The protein resides in the cytoskeleton. It is found in the cilium axoneme. Its subcellular location is the flagellum axoneme. The protein localises to the microtubule organizing center. Microtubule inner protein (MIP) part of the dynein-decorated doublet microtubules (DMTs) in cilia and flagellar axoneme. Plays a key role in the assembly or attachment of the inner dynein arm to microtubules in sperm flagella and tracheal cilia. Forms filamentous polymers in the walls of ciliary and flagellar microtubules. The chain is Tektin-2 (Tekt2) from Mus musculus (Mouse).